The primary structure comprises 234 residues: Ankyrin repeat-containing protein C6C3.08 (234 aa).

ANK repeat units lie at residues 36 to 66 (DKRTPLHWACSVGKVNTIYFLLKQPNIKPDE), 70 to 100 (AGWTPLMISINNRSVPDNVIEELINRSDVDP), 106 to 135 (GGQTCLHYAAGKGRLSIVQLLCDKAPELIR), 140 to 169 (QGQTPLHRAAAVGKIQVVKYLISQRAPLNT), and 173 to 203 (YGFTPLHFALAEGHPDVGVELVRAGADTLRK).

The chain is Ankyrin repeat-containing protein C6C3.08 from Schizosaccharomyces pombe (strain 972 / ATCC 24843) (Fission yeast).